Consider the following 348-residue polypeptide: MPDIKLKNQPFDVAFHPKEPVVFSSLLTGQVCAWSYDDATGETSSSWSVRPSKRTARALSIEENGDEIWMGGKSGSLFQLSTRDGSMTRERDSAHECPINRVYCVNRNLVATGDDDGVIKLWDPRQADSIRTYSQHFDYISDFTYFDDKRQLVATSGDGHLSVIDIRSNKSTPLTVSEDQEDELLSIVPIKGGQKAIVGSGLGILSVWNRQMGWADSVDRIPGHPASIDAIVALTPDIIATGSEDGMIRVIQVLPHKFLGVVATHEEFPVERIRLDRNNKWLGSVSHDECLKLTDVEDLFEDSDEDDEMEEDEPDSDEEKSKKKKKDNGMKDMSRGQAENDGSFFADL.

WD repeat units lie at residues 5-44 (KLKN…GETS), 51-90 (PSKR…MTRE), 94-132 (AHEC…SIRT), 135-174 (QHFD…STPL), 179-218 (DQED…ADSV), 223-261 (GHPA…FLGV), and 264-304 (THEE…EDSD). The span at 299-318 (LFEDSDEDDEMEEDEPDSDE) shows a compositional bias: acidic residues. The segment at 299-348 (LFEDSDEDDEMEEDEPDSDEEKSKKKKKDNGMKDMSRGQAENDGSFFADL) is disordered.

The protein belongs to the WD repeat WDR55 family.

It localises to the nucleus. It is found in the nucleolus. The chain is WD repeat-containing protein JIP5 (JIP5) from Cryptococcus neoformans var. neoformans serotype D (strain JEC21 / ATCC MYA-565) (Filobasidiella neoformans).